A 171-amino-acid polypeptide reads, in one-letter code: MKNNISDVKLGLLAAKIYWKSWRFLELTEDDIISIALHAEQDSKKRFNPEFGLSFDNYLKLNGANFIRSSFRSMVNKVELLDSKSKYSLEKQNTVLNTPENYLRSLEFKEIITKAFNKAKNDQERKVFSLYVKGYKNFEIAKKLNISPRRVRYLLDLFKSYIKLLTERYGY.

This is an uncharacterized protein from Mycoplasma genitalium (strain ATCC 33530 / DSM 19775 / NCTC 10195 / G37) (Mycoplasmoides genitalium).